The chain runs to 149 residues: Nucleoside diphosphate kinase (149 aa).

Lys9, Phe57, Arg85, Thr91, Arg102, and Asn112 together coordinate ATP. His115 serves as the catalytic Pros-phosphohistidine intermediate.

Belongs to the NDK family. Homotetramer. It depends on Mg(2+) as a cofactor.

The protein localises to the cytoplasm. It carries out the reaction a 2'-deoxyribonucleoside 5'-diphosphate + ATP = a 2'-deoxyribonucleoside 5'-triphosphate + ADP. The catalysed reaction is a ribonucleoside 5'-diphosphate + ATP = a ribonucleoside 5'-triphosphate + ADP. Functionally, major role in the synthesis of nucleoside triphosphates other than ATP. The ATP gamma phosphate is transferred to the NDP beta phosphate via a ping-pong mechanism, using a phosphorylated active-site intermediate. This Cyanothece sp. (strain PCC 7425 / ATCC 29141) protein is Nucleoside diphosphate kinase.